Here is a 369-residue protein sequence, read N- to C-terminus: UPF0284 protein sll1500 (369 aa).

This sequence belongs to the UPF0284 family.

The chain is UPF0284 protein sll1500 from Synechocystis sp. (strain ATCC 27184 / PCC 6803 / Kazusa).